A 75-amino-acid chain; its full sequence is Tetrahydromethanopterin S-methyltransferase subunit F (75 aa).

A helical transmembrane segment spans residues Phe53–Leu73.

It belongs to the MtrF family. The complex is composed of 8 subunits; MtrA, MtrB, MtrC, MtrD, MtrE, MtrF, MtrG and MtrH.

It is found in the cell membrane. The enzyme catalyses 5-methyl-5,6,7,8-tetrahydromethanopterin + coenzyme M + 2 Na(+)(in) = 5,6,7,8-tetrahydromethanopterin + methyl-coenzyme M + 2 Na(+)(out). Its pathway is one-carbon metabolism; methanogenesis from CO(2); methyl-coenzyme M from 5,10-methylene-5,6,7,8-tetrahydromethanopterin: step 2/2. Functionally, part of a complex that catalyzes the formation of methyl-coenzyme M and tetrahydromethanopterin from coenzyme M and methyl-tetrahydromethanopterin. This is an energy-conserving, sodium-ion translocating step. The polypeptide is Tetrahydromethanopterin S-methyltransferase subunit F (Methanopyrus kandleri (strain AV19 / DSM 6324 / JCM 9639 / NBRC 100938)).